The primary structure comprises 234 residues: Large ribosomal subunit protein uL1 (234 aa).

The protein belongs to the universal ribosomal protein uL1 family. As to quaternary structure, part of the 50S ribosomal subunit.

Functionally, binds directly to 23S rRNA. The L1 stalk is quite mobile in the ribosome, and is involved in E site tRNA release. In terms of biological role, protein L1 is also a translational repressor protein, it controls the translation of the L11 operon by binding to its mRNA. This is Large ribosomal subunit protein uL1 from Helicobacter hepaticus (strain ATCC 51449 / 3B1).